The following is a 479-amino-acid chain: Cell division protein FtsA (479 aa).

Positions 417-458 (QGRQTERKENEQRDNTDRQREDTPKQTVKKKEKTGPSFGDKL) are disordered. Over residues 420 to 440 (QTERKENEQRDNTDRQREDTP) the composition is skewed to basic and acidic residues.

Belongs to the FtsA/MreB family. Self-interacts. Interacts with FtsZ.

The protein localises to the cell inner membrane. In terms of biological role, cell division protein that is involved in the assembly of the Z ring. May serve as a membrane anchor for the Z ring. This chain is Cell division protein FtsA, found in Porphyromonas gingivalis (strain ATCC BAA-308 / W83).